We begin with the raw amino-acid sequence, 140 residues long: uncharacterized protein (140 aa).

Helical transmembrane passes span 26 to 43 (YLDL…TGVI) and 64 to 86 (LLNF…NGVL).

It belongs to the bacteriophage holin family. Cp-1 holin subfamily.

It is found in the cell membrane. This is an uncharacterized protein from Bacillus subtilis (strain 168).